A 310-amino-acid chain; its full sequence is Mitochondrial citrate transporter E (310 aa).

Solcar repeat units follow at residues 2 to 95, 107 to 199, and 208 to 293; these read STTT…LRQG, QSLG…AKRR, and DGPG…TNKI. 6 helical membrane passes run 8 to 28, 72 to 92, 114 to 133, 178 to 198, 211 to 228, and 265 to 286; these read FIAG…FETV, GSAY…YEPL, LAGA…FFLV, AMVR…FAKR, GLHL…CCVM, and IYKG…TLSL.

This sequence belongs to the mitochondrial carrier (TC 2.A.29) family.

Its subcellular location is the mitochondrion inner membrane. Mitochondrial transporter that does not mediate citrate export from mitochondria to cytoplasm. Its exact function has still to be determined. This is Mitochondrial citrate transporter E from Aspergillus niger (strain ATCC 1015 / CBS 113.46 / FGSC A1144 / LSHB Ac4 / NCTC 3858a / NRRL 328 / USDA 3528.7).